A 285-amino-acid chain; its full sequence is Polyamine aminopropyltransferase (285 aa).

A PABS domain is found at 5–241 (DTWFTEHFQT…GWWSVTLSSK (237 aa)). Q35 is a binding site for S-methyl-5'-thioadenosine. Positions 66 and 90 each coordinate spermidine. S-methyl-5'-thioadenosine contacts are provided by residues D110 and 141–142 (DG). D160 (proton acceptor) is an active-site residue. Spermidine is bound at residue 160 to 163 (DSTD). P167 contacts S-methyl-5'-thioadenosine.

Belongs to the spermidine/spermine synthase family. In terms of assembly, homodimer or homotetramer.

Its subcellular location is the cytoplasm. It carries out the reaction S-adenosyl 3-(methylsulfanyl)propylamine + putrescine = S-methyl-5'-thioadenosine + spermidine + H(+). The protein operates within amine and polyamine biosynthesis; spermidine biosynthesis; spermidine from putrescine: step 1/1. Its function is as follows. Catalyzes the irreversible transfer of a propylamine group from the amino donor S-adenosylmethioninamine (decarboxy-AdoMet) to putrescine (1,4-diaminobutane) to yield spermidine. This chain is Polyamine aminopropyltransferase, found in Xylella fastidiosa (strain Temecula1 / ATCC 700964).